The following is a 137-amino-acid chain: Small ribosomal subunit protein uS12 (137 aa).

The segment at 1–24 (MPTINQLVRKGRRSQSSKSKAPAL) is disordered. 3-methylthioaspartic acid is present on Asp-102.

The protein belongs to the universal ribosomal protein uS12 family. As to quaternary structure, part of the 30S ribosomal subunit. Contacts proteins S8 and S17. May interact with IF1 in the 30S initiation complex.

Its function is as follows. With S4 and S5 plays an important role in translational accuracy. In terms of biological role, interacts with and stabilizes bases of the 16S rRNA that are involved in tRNA selection in the A site and with the mRNA backbone. Located at the interface of the 30S and 50S subunits, it traverses the body of the 30S subunit contacting proteins on the other side and probably holding the rRNA structure together. The combined cluster of proteins S8, S12 and S17 appears to hold together the shoulder and platform of the 30S subunit. The polypeptide is Small ribosomal subunit protein uS12 (Pediococcus pentosaceus (strain ATCC 25745 / CCUG 21536 / LMG 10740 / 183-1w)).